A 58-amino-acid chain; its full sequence is APVNEDCLLPKKVGPCRAAVPRFYYNSDSGKCEGFTYGGCHANANNFKTKDECKNACH.

A BPTI/Kunitz inhibitor domain is found at 7–57; that stretch reads CLLPKKVGPCRAAVPRFYYNSDSGKCEGFTYGGCHANANNFKTKDECKNAC. Intrachain disulfides connect C7–C57, C16–C40, and C32–C53.

The protein belongs to the venom Kunitz-type family. Sea anemone type 2 potassium channel toxin subfamily. Expressed by acrorhagi.

Its subcellular location is the secreted. The protein resides in the nematocyst. Its function is as follows. Serine protease inhibitor that is strongly active against trypsin (1900 IU/mg) and moderately active against plasmin. Also shows weak inhibition against chymotrypsin (70%), elastase (38%) and the metalloprotease thermolysin (14%). The polypeptide is PI-actitoxin-Axm2a (Anthopleura aff. xanthogrammica (Sea anemone)).